Here is a 289-residue protein sequence, read N- to C-terminus: Survival motor neuron protein (289 aa).

Residues 1 to 10 (MAMGSGGGAG) are compositionally biased toward gly residues. Residues 1–27 (MAMGSGGGAGSEQEDTVLFRRGTGQSD) form a disordered region. A P1 (binding site for GEMIN2) region spans residues 11-42 (SEQEDTVLFRRGTGQSDDSDIWDDTALIKAYD). T23 bears the Phosphothreonine mark. Phosphoserine occurs at positions 26 and 29. K49 participates in a covalent cross-link: Glycyl lysine isopeptide (Lys-Gly) (interchain with G-Cter in SUMO2). The segment at 55–88 (GDMCETSDKPKGTARRKPAKKNKNQKKNATAPLK) is disordered. The span at 66–80 (GTARRKPAKKNKNQK) shows a compositional bias: basic residues. Position 67 is a phosphothreonine (T67). The Tudor domain occupies 89–149 (QWKAGDKCSA…LSPTCEVANN (61 aa)). The tract at residues 95-205 (KCSAVWSEDG…VPGAGLGPGK (111 aa)) is required for interaction with RPP20/POP7. The tract at residues 150 to 226 (TEQNTQENES…PPPPPPFLPC (77 aa)) is disordered. Basic residues predominate over residues 171-181 (RSLRSKAHSKS). K205 participates in a covalent cross-link: Glycyl lysine isopeptide (Lys-Gly) (interchain with G-Cter in SUMO2). The span at 212 to 226 (GPPPPPPPPPPFLPC) shows a compositional bias: pro residues. Residues 235–262 (PPIIPPPPPISPDCLDDTDALGSMLISW) form a P2 (binding site for SM B) region. Residues 274–289 (GFRQNKKEGKKCSHTN) form a required for interaction with SYNCRIP region.

This sequence belongs to the SMN family. In terms of assembly, homooligomer; may form higher order homooligomers in the dimer to octamer range. Part of the core SMN complex that contains SMN1, GEMIN2/SIP1, DDX20/GEMIN3, GEMIN4, GEMIN5, GEMIN6, GEMIN7, GEMIN8 and STRAP/UNRIP. Part of the SMN-Sm complex that contains SMN1, GEMIN2/SIP1, DDX20/GEMIN3, GEMIN4, GEMIN5, GEMIN6, GEMIN7, GEMIN8, STRAP/UNRIP and the Sm proteins SNRPB, SNRPD1, SNRPD2, SNRPD3, SNRPE, SNRPF and SNRPG. Component of an import snRNP complex composed of KPNB1, RNUT1, SMN1 and ZNF259. Interacts with DDX20, FBL, NOLA1, RNUT1 and with several spliceosomal snRNP core Sm proteins, including SNRPB, SNRPD1, SNRPD2, SNRPD3, SNRPE and ILF3. Interacts with GEMIN2; the interaction is direct. Interacts with GEMIN3; the interaction is direct. Interacts with GEMIN8; the interaction is direct. Interacts with SNRPB; the interaction is direct. Interacts (via Tudor domain) with SNRPD1 (via C-terminus); the interaction is direct. Interacts with SNRPD2; the interaction is direct. Interacts (via Tudor domain) with SNRPD3 (via C-terminus); the interaction is direct. Interacts with SNRPE; the interaction is direct. Interacts with OSTF1, LSM10, LSM11 and RPP20/POP7. Interacts (via C-terminal region) with ZPR1 (via C-terminal region). Interacts (via Tudor domain) with COIL. Interacts with SETX; recruits SETX to POLR2A. Interacts with POLR2A (via the C-terminal domain (CTD)). Interacts with PRMT5. Interacts with XRN2. Interacts (via C-terminus) with FMR1 (via C-terminus); the interaction is direct and occurs in a RNA-independent manner. Interacts with SYNCRIP. Interacts (via Tudor domain) with SF3B2 (methylated form). Interacts with WRAP53/TCAB1. Interacts (via Tudor domain) with ELAVL4 in an RNA-independent manner; the interaction is required for localization of ELAVL4 to RNA granules. Interacts with FRG1.

Its subcellular location is the nucleus. It is found in the gem. The protein localises to the cajal body. The protein resides in the cytoplasm. It localises to the cytoplasmic granule. Its subcellular location is the perikaryon. It is found in the cell projection. The protein localises to the neuron projection. The protein resides in the axon. It localises to the myofibril. Its subcellular location is the sarcomere. It is found in the z line. The SMN complex catalyzes the assembly of small nuclear ribonucleoproteins (snRNPs), the building blocks of the spliceosome, and thereby plays an important role in the splicing of cellular pre-mRNAs. Most spliceosomal snRNPs contain a common set of Sm proteins SNRPB, SNRPD1, SNRPD2, SNRPD3, SNRPE, SNRPF and SNRPG that assemble in a heptameric protein ring on the Sm site of the small nuclear RNA to form the core snRNP (Sm core). In the cytosol, the Sm proteins SNRPD1, SNRPD2, SNRPE, SNRPF and SNRPG are trapped in an inactive 6S pICln-Sm complex by the chaperone CLNS1A that controls the assembly of the core snRNP. To assemble core snRNPs, the SMN complex accepts the trapped 5Sm proteins from CLNS1A forming an intermediate. Binding of snRNA inside 5Sm ultimately triggers eviction of the SMN complex, thereby allowing binding of SNRPD3 and SNRPB to complete assembly of the core snRNP. Within the SMN complex, SMN1 acts as a structural backbone and together with GEMIN2 it gathers the Sm complex subunits. Ensures the correct splicing of U12 intron-containing genes that may be important for normal motor and proprioceptive neurons development. Also required for resolving RNA-DNA hybrids created by RNA polymerase II, that form R-loop in transcription terminal regions, an important step in proper transcription termination. May also play a role in the metabolism of small nucleolar ribonucleoprotein (snoRNPs). This chain is Survival motor neuron protein (Smn1), found in Rattus norvegicus (Rat).